The following is a 469-amino-acid chain: DNA repair and recombination protein rad22 (469 aa).

A disordered region spans residues 265 to 296 (PAANNHHSEKAGTQINNKDKGSHNSAKPVQRS). Residues 287–296 (HNSAKPVQRS) show a composition bias toward polar residues. A phosphoserine mark is found at Ser-296 and Ser-319. Residues 429–469 (LHDSTTSHNKSDLMRTNSDPQSAMRSRENYDATVDKKAKKG) form a disordered region. The segment covering 431–452 (DSTTSHNKSDLMRTNSDPQSAM) has biased composition (polar residues). The segment covering 453-469 (RSRENYDATVDKKAKKG) has biased composition (basic and acidic residues).

It belongs to the RAD52 family. As to quaternary structure, interacts with rhp51.

It localises to the nucleus. Active in the repair of DNA damage and in mating-type switching. Probably involved in the repair of DNA double-strands breaks. Has a role in promoting S phase completion. The sequence is that of DNA repair and recombination protein rad22 (rad22) from Schizosaccharomyces pombe (strain 972 / ATCC 24843) (Fission yeast).